A 185-amino-acid polypeptide reads, in one-letter code: p53 apoptosis effector related to PMP-22 (185 aa).

A run of 4 helical transmembrane segments spans residues 13–33 (WILP…IAAQ), 74–94 (VAAL…ISLV), 105–125 (LPFI…ALII), and 143–163 (WAYG…ILFC).

Belongs to the TMEM47 family.

It is found in the cell junction. The protein resides in the desmosome. It localises to the cell membrane. Its subcellular location is the cytoplasm. In terms of biological role, component of intercellular desmosome junctions. Positively regulates apoptosis in the early-stage embryo in response to UV irradiation, this is partially dependent on tp53 activation. Required for the survival of cell populations in the developing notochord and skin, therefore required for normal embryogenesis beyond 30 hpf. Acts as a positive regulator of endothelial cell apoptosis in response to blood flow-derived shear stress. This Danio rerio (Zebrafish) protein is p53 apoptosis effector related to PMP-22.